Reading from the N-terminus, the 360-residue chain is Phospho-N-acetylmuramoyl-pentapeptide-transferase (360 aa).

A run of 10 helical transmembrane segments spans residues 26-46, 73-93, 97-117, 132-152, 168-188, 199-219, 236-256, 263-283, 288-308, and 338-358; these read AILG…KMIA, TMGG…WGDL, YVWV…IDDY, WKYL…YASA, VMPQ…VGSS, GLAI…AYLS, AGEL…FLWF, VFMG…IAVL, ILLV…ILQV, and VIVR…ATLK.

Belongs to the glycosyltransferase 4 family. MraY subfamily. It depends on Mg(2+) as a cofactor.

It localises to the cell inner membrane. The catalysed reaction is UDP-N-acetyl-alpha-D-muramoyl-L-alanyl-gamma-D-glutamyl-meso-2,6-diaminopimeloyl-D-alanyl-D-alanine + di-trans,octa-cis-undecaprenyl phosphate = di-trans,octa-cis-undecaprenyl diphospho-N-acetyl-alpha-D-muramoyl-L-alanyl-D-glutamyl-meso-2,6-diaminopimeloyl-D-alanyl-D-alanine + UMP. It participates in cell wall biogenesis; peptidoglycan biosynthesis. Functionally, catalyzes the initial step of the lipid cycle reactions in the biosynthesis of the cell wall peptidoglycan: transfers peptidoglycan precursor phospho-MurNAc-pentapeptide from UDP-MurNAc-pentapeptide onto the lipid carrier undecaprenyl phosphate, yielding undecaprenyl-pyrophosphoryl-MurNAc-pentapeptide, known as lipid I. This Shewanella halifaxensis (strain HAW-EB4) protein is Phospho-N-acetylmuramoyl-pentapeptide-transferase.